The sequence spans 26 residues: Mucus envelope protein (26 aa).

In terms of processing, glycosylated. As to expression, produced by the opercular gland in the gill cavity and secreted as part of the mucus cocoon.

The protein localises to the secreted. Exhibits antibacterial activity. May play a role in protection against parasite settlement. This Scarus vetula (Queen parrotfish) protein is Mucus envelope protein.